The following is a 370-amino-acid chain: Nematocyst expressed protein 4 (370 aa).

The first 19 residues, 1–19, serve as a signal peptide directing secretion; it reads MAWTLVLLVLLGTSSCLDA. The segment at 34–55 is disordered; the sequence is SGSGSGEEGSSGSGSAPEPVRD. The segment covering 36 to 45 has biased composition (gly residues); the sequence is SGSGEEGSSG. ShKT domains are found at residues 70–102, 113–149, and 155–190; these read CLDK…CRFC, CTDA…CKLC, and GKKF…CEVH. Cystine bridges form between cysteine 70-cysteine 102, cysteine 77-cysteine 95, cysteine 84-cysteine 99, cysteine 113-cysteine 149, cysteine 121-cysteine 142, cysteine 131-cysteine 146, cysteine 164-cysteine 183, and cysteine 173-cysteine 187. The segment covering 306–340 has biased composition (pro residues); sequence PYPPPPPPYPEQVPPPPPPPPPPPPPPPYPYPYPY. A disordered region spans residues 306–370; sequence PYPPPPPPYP…HHKENHSKKS (65 aa). Positions 349–370 are enriched in basic residues; it reads HKSKKHAKHHEKHHKENHSKKS.

Belongs to the NEP3 family. In terms of tissue distribution, nematocytes. In late planulae, transcripts are found throughout the ectoderm in nematocytes, with high concentration of expressing cells in the oral pole. In primary polyps, is expressed in nematocytes in the body wall and physa ectoderm and in the upper and lower pharynx.

The protein localises to the nematocyst. The protein resides in the secreted. This Nematostella vectensis (Starlet sea anemone) protein is Nematocyst expressed protein 4.